A 63-amino-acid chain; its full sequence is MVIIKLNANKNMPVLAVEKPQEIHKEELSDHHQSNGFTSLDLEMIELENFVLHCPLPEENLAG.

As to quaternary structure, forms heterodimers with virE2 that prevent virE2 anarchic homopolymerization and binding to DNA.

In terms of biological role, involved in DNA transformation; controls virE2 polymerization and prevents virE2 binding to DNA. This Agrobacterium fabrum (strain C58 / ATCC 33970) (Agrobacterium tumefaciens (strain C58)) protein is Protein virE1 (virE1).